The chain runs to 102 residues: RNA-binding protein Hfq (102 aa).

The 60-residue stretch at 9-68 (DPFLNALRRERVPVSIYLVNGIKLQGQIESFDQFVILLKNTVSQMVYKHAISTVVPSRPV) folds into the Sm domain. A disordered region spans residues 64-102 (PSRPVSHHSNTPSGGTSNYHHGNNPSAPQQPQQESDDAE). The span at 70 to 96 (HHSNTPSGGTSNYHHGNNPSAPQQPQQ) shows a compositional bias: polar residues.

It belongs to the Hfq family. In terms of assembly, homohexamer.

Functionally, RNA chaperone that binds small regulatory RNA (sRNAs) and mRNAs to facilitate mRNA translational regulation in response to envelope stress, environmental stress and changes in metabolite concentrations. Also binds with high specificity to tRNAs. This is RNA-binding protein Hfq from Serratia proteamaculans (strain 568).